Reading from the N-terminus, the 465-residue chain is Monocarboxylate transporter 4 (465 aa).

The Cytoplasmic portion of the chain corresponds to 2–17; the sequence is GGAVVDEGPTGVKAPD. The chain crosses the membrane as a helical span at residues 18 to 38; that stretch reads GGWGWAVLFGCFVITGFSYAF. Residues 39–61 are Extracellular-facing; it reads PKAVSVFFKELIQEFGIGYSDTA. Residues 62–82 form a helical membrane-spanning segment; the sequence is WISSILLAMLYGTGPLCSVCV. Over 83–84 the chain is Cytoplasmic; it reads NR. A helical membrane pass occupies residues 85 to 105; that stretch reads FGCRPVMLVGGLFASLGMVAA. Residues 106–109 are Extracellular-facing; sequence SFCR. The helical transmembrane segment at 110–130 threads the bilayer; it reads SIIQVYLTTGVITGLGLALNF. Over 131-149 the chain is Cytoplasmic; sequence QPSLIMLNRYFSKRRPMAN. The chain crosses the membrane as a helical span at residues 150–170; that stretch reads GLAAAGSPVFLCALSPLGQLL. Over 171–179 the chain is Extracellular; that stretch reads QDRYGWRGG. Residues 180–200 form a helical membrane-spanning segment; sequence FLILGGLLLNCCVCAALMRPL. At 201 to 227 the chain is on the cytoplasmic side; the sequence is VVTAQPGSGPPRPSRRLLDLSVFRDRG. A helical transmembrane segment spans residues 228-248; that stretch reads FVLYAVAASVMVLGLFVPPVF. The Extracellular segment spans residues 249-264; the sequence is VVSYAKDLGVPDTKAA. A helical membrane pass occupies residues 265 to 285; the sequence is FLLTILGFIDIFARPAAGFVA. Topologically, residues 286–294 are cytoplasmic; that stretch reads GLGKVRPYS. A helical transmembrane segment spans residues 295–315; sequence VYLFSFSMFFNGLADLAGSTA. Residues 316–317 are Extracellular-facing; it reads GD. Residues 318-338 traverse the membrane as a helical segment; that stretch reads YGGLVVFCIFFGISYGMVGAL. The Cytoplasmic portion of the chain corresponds to 339–351; that stretch reads QFEVLMAIVGTHK. Residues 352–372 form a helical membrane-spanning segment; the sequence is FSSAIGLVLLMEAVAVLVGPP. The Extracellular segment spans residues 373 to 384; that stretch reads SGGKLLDATHVY. Residues 385–405 traverse the membrane as a helical segment; it reads MYVFILAGAEVLTSSLILLLG. At 406–465 the chain is on the cytoplasmic side; sequence NFFCIRKKPKEPQPEVAAAEEEKLHKPPADSGVDLREVEHFLKAEPEKNGEVVHTPETSV. The segment at 419–438 is disordered; sequence PEVAAAEEEKLHKPPADSGV. Basolateral sorting signal regions lie at residues 423–441 and 441–465; these read AAEE…VDLR and REVE…ETSV. A compositionally biased stretch (basic and acidic residues) spans 425–438; it reads EEEKLHKPPADSGV. Ser-436 carries the phosphoserine modification. Thr-460 carries the post-translational modification Phosphothreonine. Ser-464 is modified (phosphoserine).

It belongs to the major facilitator superfamily. Monocarboxylate porter (TC 2.A.1.13) family. In terms of assembly, interacts with BSG; interaction mediates SLC16A3 targeting to the plasma membrane. As to expression, highly expressed in skeletal muscle.

The protein localises to the cell membrane. It is found in the basolateral cell membrane. It carries out the reaction (S)-lactate(in) + H(+)(in) = (S)-lactate(out) + H(+)(out). The enzyme catalyses pyruvate(out) + H(+)(out) = pyruvate(in) + H(+)(in). Its function is as follows. Proton-dependent transporter of monocarboxylates such as L-lactate and pyruvate. Plays a predominant role in L-lactate efflux from highly glycolytic cells. This Homo sapiens (Human) protein is Monocarboxylate transporter 4 (SLC16A3).